The chain runs to 141 residues: Hemoglobin subunit alpha-D (141 aa).

Residues 1–141 (VLTAEDRRLL…VADVLSEKYR (141 aa)) enclose the Globin domain. 2 residues coordinate heme b: His-57 and His-87.

Belongs to the globin family. The deoxy-Hb is a heterotetramer of two alpha and two beta chains, but oxygenation results in dissociation to dimers. In terms of tissue distribution, red blood cells.

Involved in oxygen transport from the lung to the various peripheral tissues. The chain is Hemoglobin subunit alpha-D (HBAD) from Erythrolamprus miliaris (South American water snake).